The sequence spans 260 residues: MAIITMKSLLEAGVHFGHQVKRLDPRMKRFIFSERNEIHILDLQKTLQGIKDSYELVQRVIKDGKKVLFVGTKKQASEIIEQEARRSDMPYVNNRWLGGMLSNFNTIRKSVQKLKKLEKMEVDGTFDMISKKEISQLNREKSKLAKNLTGIKDMETLPGAIFIIDPKREQIAINEARKLKIPIISVVDTNCNPDVIDCPIPGNDDAIRSVALFTKIISDAILESDKEVGIQIIENLNEEDLMKEIEIKNDKSDSIEERGE.

This sequence belongs to the universal ribosomal protein uS2 family.

The sequence is that of Small ribosomal subunit protein uS2 (rpsB) from Borreliella burgdorferi (strain ATCC 35210 / DSM 4680 / CIP 102532 / B31) (Borrelia burgdorferi).